Consider the following 125-residue polypeptide: Acidic phospholipase A2 5 (125 aa).

Residue serine 1 is a signal peptide. A propeptide spanning residues asparagine 2 to leucine 7 is cleaved from the precursor. Disulfide bonds link cysteine 18-cysteine 77, cysteine 33-cysteine 124, cysteine 35-cysteine 50, cysteine 37-cysteine 54, cysteine 49-cysteine 105, cysteine 56-cysteine 98, cysteine 66-cysteine 91, and cysteine 84-cysteine 96. An N-acetyl-beta-D-glucosamine-binding site is contributed by phenylalanine 28. Aspartate 30 contributes to the Zn(2+) binding site. The Ca(2+) site is built by tyrosine 34 and glycine 36. N-acetyl-beta-D-glucosamine contacts are provided by histidine 53 and lysine 69. Histidine 53 is an active-site residue. Glutamate 76 provides a ligand contact to Zn(2+). The active site involves aspartate 99. Asparagine 117 contributes to the Zn(2+) binding site.

In terms of assembly, heterodimer formed between isoform 5 and isoform 6 in presence of zinc ion and monomer in absence of zinc ion. Requires Ca(2+) as cofactor. In terms of tissue distribution, expressed by the venom gland.

It is found in the secreted. The catalysed reaction is a 1,2-diacyl-sn-glycero-3-phosphocholine + H2O = a 1-acyl-sn-glycero-3-phosphocholine + a fatty acid + H(+). Functionally, PLA2 catalyzes the calcium-dependent hydrolysis of the 2-acyl groups in 3-sn-phosphoglycerides. In Naja sagittifera (Andaman cobra), this protein is Acidic phospholipase A2 5.